Reading from the N-terminus, the 324-residue chain is Anthranilate phosphoribosyltransferase (324 aa).

5-phospho-alpha-D-ribose 1-diphosphate is bound by residues Gly-75, 78–79, Thr-83, 85–88, 102–110, and Ser-114; these read GD, NVST, and KHGNFGITG. Gly-75 serves as a coordination point for anthranilate. Ser-87 contacts Mg(2+). An anthranilate-binding site is contributed by Asn-105. Arg-160 serves as a coordination point for anthranilate. The Mg(2+) site is built by Asp-216 and Glu-217.

The protein belongs to the anthranilate phosphoribosyltransferase family. As to quaternary structure, homodimer. The cofactor is Mg(2+).

The enzyme catalyses N-(5-phospho-beta-D-ribosyl)anthranilate + diphosphate = 5-phospho-alpha-D-ribose 1-diphosphate + anthranilate. It participates in amino-acid biosynthesis; L-tryptophan biosynthesis; L-tryptophan from chorismate: step 2/5. Catalyzes the transfer of the phosphoribosyl group of 5-phosphorylribose-1-pyrophosphate (PRPP) to anthranilate to yield N-(5'-phosphoribosyl)-anthranilate (PRA). This Picrophilus torridus (strain ATCC 700027 / DSM 9790 / JCM 10055 / NBRC 100828 / KAW 2/3) protein is Anthranilate phosphoribosyltransferase.